Reading from the N-terminus, the 385-residue chain is Acetylornithine deacetylase (385 aa).

Residue His80 participates in Zn(2+) binding. Asp82 is an active-site residue. Asp112 provides a ligand contact to Zn(2+). Glu144 acts as the Proton acceptor in catalysis. Residues Glu145, Glu169, and His355 each coordinate Zn(2+).

The protein belongs to the peptidase M20A family. ArgE subfamily. Homodimer. Zn(2+) is required as a cofactor. It depends on Co(2+) as a cofactor. Requires glutathione as cofactor.

The protein resides in the cytoplasm. The catalysed reaction is N(2)-acetyl-L-ornithine + H2O = L-ornithine + acetate. The protein operates within amino-acid biosynthesis; L-arginine biosynthesis; L-ornithine from N(2)-acetyl-L-ornithine (linear): step 1/1. Functionally, catalyzes the hydrolysis of the amide bond of N(2)-acetylated L-amino acids. Cleaves the acetyl group from N-acetyl-L-ornithine to form L-ornithine, an intermediate in L-arginine biosynthesis pathway, and a branchpoint in the synthesis of polyamines. This is Acetylornithine deacetylase from Photorhabdus laumondii subsp. laumondii (strain DSM 15139 / CIP 105565 / TT01) (Photorhabdus luminescens subsp. laumondii).